Reading from the N-terminus, the 117-residue chain is Large ribosomal subunit protein bL19 (117 aa).

This sequence belongs to the bacterial ribosomal protein bL19 family.

This protein is located at the 30S-50S ribosomal subunit interface and may play a role in the structure and function of the aminoacyl-tRNA binding site. In Bacteroides fragilis (strain ATCC 25285 / DSM 2151 / CCUG 4856 / JCM 11019 / LMG 10263 / NCTC 9343 / Onslow / VPI 2553 / EN-2), this protein is Large ribosomal subunit protein bL19.